Consider the following 315-residue polypeptide: Calumenin (315 aa).

The signal sequence occupies residues 1–19; sequence MDLRQFLMCLSLCTAFALS. Tyr-47 carries the post-translational modification Phosphotyrosine. At Thr-65 the chain carries Phosphothreonine. 6 consecutive EF-hand domains span residues 68–103, 104–139, 151–186, 188–223, 229–264, and 265–300; these read ESKE…AQKK, YIYD…TYLD, PIMV…EEYD, MKDI…HDGN, WVKT…SDYD, and HAEA…FVGS. Ser-69 carries the post-translational modification Phosphoserine. Ca(2+)-binding residues include Asp-81, Asp-83, Asp-85, Glu-92, Asp-117, Asn-119, Asp-121, and Glu-128. An N-linked (GlcNAc...) asparagine glycan is attached at Asn-131. Asp-164, Asp-166, Asp-168, Glu-175, Asp-201, Asn-203, Asp-205, Glu-212, Asp-242, Asn-244, Asp-246, Lys-248, and Glu-253 together coordinate Ca(2+). A Phosphothreonine modification is found at Thr-254. Ser-261 and Ser-277 each carry phosphoserine. Positions 278, 280, 282, 284, and 289 each coordinate Ca(2+). The Prevents secretion from ER signature appears at 312 to 315; the sequence is HDEF.

It belongs to the CREC family. Binds crotoxin. Interacts with GGCX.

It is found in the endoplasmic reticulum membrane. It localises to the golgi apparatus. Its subcellular location is the secreted. The protein localises to the melanosome. The protein resides in the sarcoplasmic reticulum lumen. Functionally, involved in regulation of vitamin K-dependent carboxylation of multiple N-terminal glutamate residues. Seems to inhibit gamma-carboxylase GGCX. Binds 7 calcium ions with a low affinity. In Rattus norvegicus (Rat), this protein is Calumenin (Calu).